Reading from the N-terminus, the 124-residue chain is uncharacterized protein (124 aa).

Disordered stretches follow at residues 1–26 (MRRQ…QPRP) and 100–124 (IPGQ…GLRR). A compositionally biased stretch (polar residues) spans 102–115 (GQQSRNCSLPQTKY).

Its subcellular location is the cytoplasm. The protein resides in the cytoskeleton. The protein localises to the cilium basal body. This is an uncharacterized protein from Rattus norvegicus (Rat).